A 415-amino-acid chain; its full sequence is Serine hydroxymethyltransferase 1 (415 aa).

(6S)-5,6,7,8-tetrahydrofolate contacts are provided by residues leucine 122 and 126 to 128; that span reads GHL. Lysine 230 carries the N6-(pyridoxal phosphate)lysine modification.

The protein belongs to the SHMT family. As to quaternary structure, homodimer. Pyridoxal 5'-phosphate serves as cofactor.

It is found in the cytoplasm. It catalyses the reaction (6R)-5,10-methylene-5,6,7,8-tetrahydrofolate + glycine + H2O = (6S)-5,6,7,8-tetrahydrofolate + L-serine. The protein operates within one-carbon metabolism; tetrahydrofolate interconversion. Its pathway is amino-acid biosynthesis; glycine biosynthesis; glycine from L-serine: step 1/1. Its function is as follows. Catalyzes the reversible interconversion of serine and glycine with tetrahydrofolate (THF) serving as the one-carbon carrier. This reaction serves as the major source of one-carbon groups required for the biosynthesis of purines, thymidylate, methionine, and other important biomolecules. Also exhibits THF-independent aldolase activity toward beta-hydroxyamino acids, producing glycine and aldehydes, via a retro-aldol mechanism. The chain is Serine hydroxymethyltransferase 1 from Cupriavidus pinatubonensis (strain JMP 134 / LMG 1197) (Cupriavidus necator (strain JMP 134)).